Here is a 175-residue protein sequence, read N- to C-terminus: Crossover junction endodeoxyribonuclease RuvC (175 aa).

Active-site residues include D8, E68, and D140. Mg(2+) contacts are provided by D8, E68, and D140.

Belongs to the RuvC family. As to quaternary structure, homodimer which binds Holliday junction (HJ) DNA. The HJ becomes 2-fold symmetrical on binding to RuvC with unstacked arms; it has a different conformation from HJ DNA in complex with RuvA. In the full resolvosome a probable DNA-RuvA(4)-RuvB(12)-RuvC(2) complex forms which resolves the HJ. It depends on Mg(2+) as a cofactor.

Its subcellular location is the cytoplasm. It carries out the reaction Endonucleolytic cleavage at a junction such as a reciprocal single-stranded crossover between two homologous DNA duplexes (Holliday junction).. Functionally, the RuvA-RuvB-RuvC complex processes Holliday junction (HJ) DNA during genetic recombination and DNA repair. Endonuclease that resolves HJ intermediates. Cleaves cruciform DNA by making single-stranded nicks across the HJ at symmetrical positions within the homologous arms, yielding a 5'-phosphate and a 3'-hydroxyl group; requires a central core of homology in the junction. The consensus cleavage sequence is 5'-(A/T)TT(C/G)-3'. Cleavage occurs on the 3'-side of the TT dinucleotide at the point of strand exchange. HJ branch migration catalyzed by RuvA-RuvB allows RuvC to scan DNA until it finds its consensus sequence, where it cleaves and resolves the cruciform DNA. This Pseudomonas fluorescens (strain Pf0-1) protein is Crossover junction endodeoxyribonuclease RuvC.